The sequence spans 361 residues: MESIFHEKQEGSLCAQHCLNNLLQGEYFSPVELSSIAHQLDEEERMRMAEGGVTSEDYRTFLQQPSGNMDDSGFFSIQVISNALKVWGLELILFNSPEYQRLRIDPINERSFICNYKEHWFTVRKLGKQWFNLNSLLTGPELISDTYLALFLAQLQQEGYSIFVVKGDLPDCEADQLLQMIRVQQMHRPKLIGEELAQLKEQRVHKTDLERVLEANDGSGMLDEDEEDLQRALALSRQEIDMEDEEADLRRAIQLSMQGSSRNISQDMTQTSGTNLTSEELRKRREAYFEKQQQKQQQQQQQQQQGDLSGQSSHPCERPATSSGALGSDLGDAMSEEDMLQAAVTMSLETVRNDLKTEGKK.

Met1 participates in a covalent cross-link: Peptide (Met-Gly) (interchain with G-Cter in ubiquitin). The 180-residue stretch at 1 to 180 (MESIFHEKQE…DCEADQLLQM (180 aa)) folds into the Josephin domain. The active-site Nucleophile is the Cys14. His119 functions as the Proton acceptor in the catalytic mechanism. Residue Asn134 is part of the active site. A Glycyl lysine isopeptide (Lys-Gly) (interchain with G-Cter in ubiquitin) cross-link involves residue Lys200. At Ser219 the chain carries Phosphoserine. 2 consecutive UIM domains span residues 224-243 (EDEE…IDME) and 244-263 (DEEA…SSRN). Residues 258–278 (QGSSRNISQDMTQTSGTNLTS) are compositionally biased toward polar residues. A disordered region spans residues 258-338 (QGSSRNISQD…DLGDAMSEED (81 aa)). Phosphoserine occurs at positions 265 and 272. Basic and acidic residues predominate over residues 279–293 (EELRKRREAYFEKQQ). Positions 294–305 (QKQQQQQQQQQQ) are enriched in low complexity. The span at 306–325 (GDLSGQSSHPCERPATSSGA) shows a compositional bias: polar residues. Ser328 carries the phosphoserine modification. Residues 331 to 349 (GDAMSEEDMLQAAVTMSLE) enclose the UIM 3 domain.

In terms of assembly, interacts with STUB1/CHIP (when monoubiquitinated). Interacts with DNA repair proteins RAD23A and RAD23B. Interacts with BECN1 (via its poly-Gln domain). Interacts with PRKN, UBR2, VCP and tubulin. Short isoform 1 interacts with CASP7. Post-translationally, monoubiquitinated N-terminally by UBE2W, possibly leading to activate the deubiquitinating enzyme activity. As to expression, ubiquitous.

It localises to the nucleus matrix. The protein localises to the nucleus. Its subcellular location is the lysosome membrane. The catalysed reaction is Thiol-dependent hydrolysis of ester, thioester, amide, peptide and isopeptide bonds formed by the C-terminal Gly of ubiquitin (a 76-residue protein attached to proteins as an intracellular targeting signal).. Its function is as follows. Deubiquitinating enzyme involved in protein homeostasis maintenance, transcription, cytoskeleton regulation, myogenesis and degradation of misfolded chaperone substrates. Binds long polyubiquitin chains and trims them, while it has weak or no activity against chains of 4 or less ubiquitins. Involved in degradation of misfolded chaperone substrates via its interaction with STUB1/CHIP: recruited to monoubiquitinated STUB1/CHIP, and restricts the length of ubiquitin chain attached to STUB1/CHIP substrates and preventing further chain extension. Interacts with key regulators of transcription and represses transcription: acts as a histone-binding protein that regulates transcription. Acts as a negative regulator of mTORC1 signaling in response to amino acid deprivation by mediating deubiquitination of RHEB, thereby promoting RHEB inactivation by the TSC-TBC complex. Regulates autophagy via the deubiquitination of 'Lys-402' of BECN1 leading to the stabilization of BECN1. The polypeptide is Ataxin-3 (Homo sapiens (Human)).